Reading from the N-terminus, the 530-residue chain is Glutamate--cysteine ligase (530 aa).

This sequence belongs to the glutamate--cysteine ligase type 1 family. Type 1 subfamily.

It catalyses the reaction L-cysteine + L-glutamate + ATP = gamma-L-glutamyl-L-cysteine + ADP + phosphate + H(+). It functions in the pathway sulfur metabolism; glutathione biosynthesis; glutathione from L-cysteine and L-glutamate: step 1/2. The polypeptide is Glutamate--cysteine ligase (Azotobacter vinelandii (strain DJ / ATCC BAA-1303)).